The primary structure comprises 137 residues: Large ribosomal subunit protein uL16 (137 aa).

It belongs to the universal ribosomal protein uL16 family. Part of the 50S ribosomal subunit.

Functionally, binds 23S rRNA and is also seen to make contacts with the A and possibly P site tRNAs. This is Large ribosomal subunit protein uL16 from Mesorhizobium japonicum (strain LMG 29417 / CECT 9101 / MAFF 303099) (Mesorhizobium loti (strain MAFF 303099)).